A 491-amino-acid polypeptide reads, in one-letter code: Leucine aminopeptidase 1 (491 aa).

Residues Lys-252 and Asp-257 each coordinate Zn(2+). Residue Lys-264 is part of the active site. Residues Asp-275, Asp-334, and Glu-336 each coordinate Zn(2+). Arg-338 is a catalytic residue.

This sequence belongs to the peptidase M17 family. It depends on Zn(2+) as a cofactor. As to expression, expressed in the buccal cavity, pharynx, anterior gut and rectum.

It catalyses the reaction Release of an N-terminal amino acid, Xaa-|-Yaa-, in which Xaa is preferably Leu, but may be other amino acids including Pro although not Arg or Lys, and Yaa may be Pro. Amino acid amides and methyl esters are also readily hydrolyzed, but rates on arylamides are exceedingly low.. Probably acts as a digestive enzyme. The sequence is that of Leucine aminopeptidase 1 (lap-1) from Caenorhabditis elegans.